Reading from the N-terminus, the 431-residue chain is Beta-lactamase hydrolase-like protein (431 aa).

The Zn(2+) site is built by His212, His214, and His286. Position 309 (Asp309) interacts with substrate.

It belongs to the metallo-beta-lactamase superfamily. Zn(2+) is required as a cofactor.

Functionally, could play a role in cell adherence or biofilm development. This is Beta-lactamase hydrolase-like protein from Xylella fastidiosa (strain Temecula1 / ATCC 700964).